A 77-amino-acid polypeptide reads, in one-letter code: Metallothionein-like protein 2 (77 aa).

It belongs to the metallothionein superfamily. Type 15 family.

Functionally, metallothioneins have a high content of cysteine residues that bind various heavy metals. The chain is Metallothionein-like protein 2 (MT1A) from Trifolium repens (Creeping white clover).